Consider the following 183-residue polypeptide: ER membrane protein complex subunit 4 (183 aa).

Position 2 is an N-acetylthreonine (Thr-2). Topologically, residues Thr-2–Glu-66 are cytoplasmic. Positions Glu-20 to Gly-39 are disordered. The residue at position 36 (Ser-36) is a Phosphoserine. The chain crosses the membrane as a helical span at residues Lys-67–Met-87. Residues Tyr-88–Pro-98 are Lumenal-facing. A helical transmembrane segment spans residues Thr-99–Phe-120. At Lys-121 to Ser-127 the chain is on the cytoplasmic side. A helical transmembrane segment spans residues Gln-128 to Val-148. Residues Tyr-149–Leu-183 are Lumenal-facing.

This sequence belongs to the EMC4 family. In terms of assembly, component of the ER membrane protein complex (EMC). In terms of tissue distribution, isoform 1 is expressed in brain and heart. Isoform 2 is expressed in heart.

The protein localises to the endoplasmic reticulum membrane. Part of the endoplasmic reticulum membrane protein complex (EMC) that enables the energy-independent insertion into endoplasmic reticulum membranes of newly synthesized membrane proteins. Preferentially accommodates proteins with transmembrane domains that are weakly hydrophobic or contain destabilizing features such as charged and aromatic residues. Involved in the cotranslational insertion of multi-pass membrane proteins in which stop-transfer membrane-anchor sequences become ER membrane spanning helices. It is also required for the post-translational insertion of tail-anchored/TA proteins in endoplasmic reticulum membranes. By mediating the proper cotranslational insertion of N-terminal transmembrane domains in an N-exo topology, with translocated N-terminus in the lumen of the ER, controls the topology of multi-pass membrane proteins like the G protein-coupled receptors. By regulating the insertion of various proteins in membranes, it is indirectly involved in many cellular processes. The chain is ER membrane protein complex subunit 4 (EMC4) from Homo sapiens (Human).